Consider the following 323-residue polypeptide: UPF0612 protein C569.01c (323 aa).

2 coiled-coil regions span residues 27 to 63 and 131 to 225; these read IKRY…MKYE and NEMN…DARS.

Belongs to the UPF0612 family.

The protein is UPF0612 protein C569.01c of Schizosaccharomyces pombe (strain 972 / ATCC 24843) (Fission yeast).